A 151-amino-acid chain; its full sequence is UPF0561 protein C2orf68 homolog (151 aa).

The tract at residues 1 to 89 is disordered; sequence MEEEGEAQGR…TLKDEPNDNG (89 aa). Composition is skewed to basic and acidic residues over residues 32 to 46 and 70 to 85; these read LARDDYDREVKQAKE and RQREKAHTTETLKDEP.

This sequence belongs to the UPF0561 family.

This is UPF0561 protein C2orf68 homolog from Xenopus laevis (African clawed frog).